The following is a 181-amino-acid chain: NAD(P)H-quinone oxidoreductase subunit I, chloroplastic (181 aa).

4Fe-4S ferredoxin-type domains follow at residues 55-84 and 95-124; these read GRIH…VDWE and KSYS…MTEE. Residues cysteine 64, cysteine 67, cysteine 70, cysteine 74, cysteine 104, cysteine 107, cysteine 110, and cysteine 114 each coordinate [4Fe-4S] cluster.

It belongs to the complex I 23 kDa subunit family. In terms of assembly, NDH is composed of at least 16 different subunits, 5 of which are encoded in the nucleus. [4Fe-4S] cluster serves as cofactor.

It localises to the plastid. Its subcellular location is the chloroplast thylakoid membrane. The enzyme catalyses a plastoquinone + NADH + (n+1) H(+)(in) = a plastoquinol + NAD(+) + n H(+)(out). The catalysed reaction is a plastoquinone + NADPH + (n+1) H(+)(in) = a plastoquinol + NADP(+) + n H(+)(out). Functionally, NDH shuttles electrons from NAD(P)H:plastoquinone, via FMN and iron-sulfur (Fe-S) centers, to quinones in the photosynthetic chain and possibly in a chloroplast respiratory chain. The immediate electron acceptor for the enzyme in this species is believed to be plastoquinone. Couples the redox reaction to proton translocation, and thus conserves the redox energy in a proton gradient. This chain is NAD(P)H-quinone oxidoreductase subunit I, chloroplastic, found in Physcomitrium patens (Spreading-leaved earth moss).